We begin with the raw amino-acid sequence, 203 residues long: Peptide deformylase (203 aa).

2 residues coordinate Fe cation: Cys130 and His173. Glu174 is an active-site residue. Fe cation is bound at residue His177.

The protein belongs to the polypeptide deformylase family. Fe(2+) is required as a cofactor.

It catalyses the reaction N-terminal N-formyl-L-methionyl-[peptide] + H2O = N-terminal L-methionyl-[peptide] + formate. Removes the formyl group from the N-terminal Met of newly synthesized proteins. Requires at least a dipeptide for an efficient rate of reaction. N-terminal L-methionine is a prerequisite for activity but the enzyme has broad specificity at other positions. This is Peptide deformylase from Streptococcus pneumoniae serotype 4 (strain ATCC BAA-334 / TIGR4).